A 589-amino-acid chain; its full sequence is Arginine--tRNA ligase (589 aa).

Positions 131–141 (ANPTGPLHVGH) match the 'HIGH' region motif.

The protein belongs to the class-I aminoacyl-tRNA synthetase family. In terms of assembly, monomer.

It is found in the cytoplasm. The enzyme catalyses tRNA(Arg) + L-arginine + ATP = L-arginyl-tRNA(Arg) + AMP + diphosphate. The protein is Arginine--tRNA ligase of Legionella pneumophila subsp. pneumophila (strain Philadelphia 1 / ATCC 33152 / DSM 7513).